A 208-amino-acid polypeptide reads, in one-letter code: Large ribosomal subunit protein uL4 (208 aa).

Residues 45–83 (RQGTHKSKTRAEVRGGGRKPYRQKGTGNARQGSTRSPLM) form a disordered region. Residues 69–80 (GTGNARQGSTRS) show a composition bias toward polar residues.

The protein belongs to the universal ribosomal protein uL4 family. As to quaternary structure, part of the 50S ribosomal subunit.

One of the primary rRNA binding proteins, this protein initially binds near the 5'-end of the 23S rRNA. It is important during the early stages of 50S assembly. It makes multiple contacts with different domains of the 23S rRNA in the assembled 50S subunit and ribosome. Functionally, forms part of the polypeptide exit tunnel. The chain is Large ribosomal subunit protein uL4 from Chlorobium luteolum (strain DSM 273 / BCRC 81028 / 2530) (Pelodictyon luteolum).